The chain runs to 109 residues: Parvalbumin, muscle (109 aa).

Residue Ala1 is modified to N-acetylalanine. EF-hand domains follow at residues 38–73 and 77–109; these read KSPE…FTPD and LSDK…VAES. Positions 51, 53, 55, 62, 90, 92, 94, 96, and 101 each coordinate Ca(2+).

The protein belongs to the parvalbumin family.

In muscle, parvalbumin is thought to be involved in relaxation after contraction. It binds two calcium ions. In Gallus gallus (Chicken), this protein is Parvalbumin, muscle.